The chain runs to 969 residues: MFVVGQRWISESENNLGLGIVTASDNRTVTIQFPAAEEERIYALSVAPLTRVQFQKGDRINSVEGWQLDVEEVVENQGFIIYLGKRADSGEEAVLPEMQLDHKVSFSKPQDRLFSAQIDRSDRFALRYRALQHQQAQFQSPLRGMRGIRASLIPHQLHIAKEVGQRVAPRVLLADEVGLGKTIEAGMILQQQLFSGRVERVLVLVPESLQHQWLVEMLRRFNLKFSLFDEERCSDFDKADEDGNDVSENPFDSEALVIASIDWLESSPNRAKQVLASHWDMLIVDEAHHLAWSENEPSVGYQFVERLSKQTPAVLLLTATPEQLGQESHFARLALLDADRFYDYHSFIAEQKDYKPVADAVATLLNDKPLSHDEQNSIAELLSEKDTEPMFKVINSEKSKENDRLQVRQELIRELIDRHGTSRVLFRNTRQGVKGFPHRVYHQITLEMPSQYTNALKVMGMMGGVTKDDQLYPERLFQRMNPAAKWADFDPRIEWLITFLKNHRDEKILVICKQADTAIALEQILREREAIRSAVFHEKMSIVERDRASAYFAQMEEGAQVLISSSIGSEGRNFQFASNLVLFNLPDNPDLLEQSIGRLDRIGQKNDIQIHVPCFENSMQMVLATWYHQGLNAFEETCPMGAALFREFGEELEGFLKNPQAVGFDEFLVRTFKRQQQLKAELEQGRDRLLELNSNGGEVAQALAEAIAKEDNNPHLVNFALSLFDVIGLEQEDLGEQSIVISPTGHMLVPDFPGIAEDSTTVTFDRQLALMREDVEFLTWDHPMIRNGIDLITSGDIGKSAISLLINKHLPAGTLLLEAIYMVETQAPKGLNLTRFLPPTPVRILLGNKGNDMAAQVSFTGLEKQLKPVNKQMANKIAKMAQADIKKLIDISEQKIAAKLPELIEKASQDADSTLSAELYRLTSLQAVNKNIRADEIEALEQQRIESLKQIALANWRLDSLRVIVSNKE.

One can recognise a Helicase ATP-binding domain in the interval 162-339; it reads EVGQRVAPRV…FARLALLDAD (178 aa). 175–182 contributes to the ATP binding site; sequence DEVGLGKT. The DEAH box motif lies at 285–288; sequence DEAH. In terms of domain architecture, Helicase C-terminal spans 492-663; the sequence is RIEWLITFLK…GFLKNPQAVG (172 aa).

Belongs to the SNF2/RAD54 helicase family. RapA subfamily. Interacts with the RNAP. Has a higher affinity for the core RNAP than for the holoenzyme. Its ATPase activity is stimulated by binding to RNAP.

Transcription regulator that activates transcription by stimulating RNA polymerase (RNAP) recycling in case of stress conditions such as supercoiled DNA or high salt concentrations. Probably acts by releasing the RNAP, when it is trapped or immobilized on tightly supercoiled DNA. Does not activate transcription on linear DNA. Probably not involved in DNA repair. In Actinobacillus pleuropneumoniae serotype 5b (strain L20), this protein is RNA polymerase-associated protein RapA.